The chain runs to 206 residues: Thymidylate kinase (206 aa).

11 to 18 contacts ATP; it reads GIDGAGKT.

It belongs to the thymidylate kinase family.

It catalyses the reaction dTMP + ATP = dTDP + ADP. Phosphorylation of dTMP to form dTDP in both de novo and salvage pathways of dTTP synthesis. The protein is Thymidylate kinase of Burkholderia lata (strain ATCC 17760 / DSM 23089 / LMG 22485 / NCIMB 9086 / R18194 / 383).